The chain runs to 596 residues: (E)-beta-ocimene synthase, chloroplastic (596 aa).

Residues 1-35 constitute a chloroplast transit peptide; sequence MAITHYQMASFQSSFHFCMLRKTLRQKSSLHFAKR. Residues arginine 307, aspartate 344, aspartate 348, arginine 485, and asparagine 488 each coordinate (2E)-geranyl diphosphate. 2 residues coordinate Mg(2+): aspartate 344 and aspartate 348. Residues 344 to 348 carry the DDXXD motif motif; sequence DDIYD. Residues asparagine 488, alanine 492, and glutamate 496 each coordinate Mg(2+).

The protein belongs to the terpene synthase family. Tpsb subfamily. It depends on Mg(2+) as a cofactor. Mn(2+) is required as a cofactor. As to expression, highly expressed in leaves, stems and disk florets. Detected in roots.

It localises to the plastid. The protein localises to the chloroplast. It carries out the reaction (2E)-geranyl diphosphate = (E)-beta-ocimene + diphosphate. The protein operates within secondary metabolite biosynthesis; terpenoid biosynthesis. Monoterpene synthase involved in the biosynthesis of (E)-beta-ocimene as the major product and trace amounts of (Z)-beta-ocimene. Can only accept geranyl diphosphate as substrate. This Matricaria chamomilla var. recutita (German chamomile) protein is (E)-beta-ocimene synthase, chloroplastic.